Here is a 637-residue protein sequence, read N- to C-terminus: Early transcription factor 70 kDa subunit (637 aa).

Residues 32 to 185 (RTIIDENRSV…GHIIDLMSEE (154 aa)) enclose the Helicase ATP-binding domain. Residue 45–52 (HIMGSGKT) participates in ATP binding. The short motif at 135 to 138 (DEAH) is the DEXH box element. The region spanning 327–507 (KFKYFINRIQ…VLPFDIKKLL (181 aa)) is the Helicase C-terminal domain.

It belongs to the helicase family. VETF subfamily. In terms of assembly, heterodimer of a 70 kDa and a 82 kDa subunit. Part of the early transcription complex composed of ETF, RAP94/OPG109, and the DNA-directed RNA polymerase.

The protein resides in the virion. Acts with RNA polymerase to initiate transcription from early gene promoters. Is recruited by the RPO-associated protein of 94 kDa RAP94/OPG109 to form the early transcription complex, which also contains the core RNA polymerase. ETF heterodimer binds to early gene promoters. In Vaccinia virus (strain Ankara) (VACV), this protein is Early transcription factor 70 kDa subunit (OPG118).